The following is a 476-amino-acid chain: Serine/threonine-protein kinase sax-1 (476 aa).

Positions 87 to 381 (FESLKVIGRG…LDEIKQCPFV (295 aa)) constitute a Protein kinase domain. Residues 93–101 (IGRGAFGEV) and lysine 116 each bind ATP. Aspartate 210 (proton acceptor) is an active-site residue. The AGC-kinase C-terminal domain occupies 382–452 (KRIDWNHIRE…KRFDGLTQKM (71 aa)).

It belongs to the protein kinase superfamily. AGC Ser/Thr protein kinase family. Mg(2+) is required as a cofactor. Widely expressed in embryonic and larval neurons that contribute axons to the nerve ring and in hypodermal cells, including lateral seam cells. Also displays a punctate localization in muscle.

The protein resides in the cytoplasm. The protein localises to the nucleus. It carries out the reaction L-seryl-[protein] + ATP = O-phospho-L-seryl-[protein] + ADP + H(+). It catalyses the reaction L-threonyl-[protein] + ATP = O-phospho-L-threonyl-[protein] + ADP + H(+). Its function is as follows. Acts with sax-2 to restrict the growth of both primary and secondary neurites. Regulates mechanosensory tiling by controlling the termination point of sensory dendrites. In Caenorhabditis elegans, this protein is Serine/threonine-protein kinase sax-1.